Reading from the N-terminus, the 86-residue chain is Serine protease inhibitor Kazal-type 2 (86 aa).

The N-terminal stretch at Met-1–Ser-16 is a signal peptide. The region spanning Gln-32 to Cys-86 is the Kazal-like domain. 3 disulfides stabilise this stretch: Cys-38–Cys-68, Cys-46–Cys-65, and Cys-54–Cys-86.

In terms of tissue distribution, expressed in sperm (at protein level). Expressed in testis but not in ovary, brain, heart, kidney or lung. Within testis, expressed in epididymis and germ cells.

Its subcellular location is the secreted. The protein localises to the cytoplasmic vesicle. It localises to the secretory vesicle. It is found in the acrosome. Functionally, as a strong inhibitor of acrosin, it is required for normal spermiogenesis. It probably hinders premature activation of proacrosin and other proteases, thus preventing the cascade of events leading to spermiogenesis defects. May be involved in the regulation of serine protease-dependent germ cell apoptosis. It also inhibits trypsin. In Mus musculus (Mouse), this protein is Serine protease inhibitor Kazal-type 2 (Spink2).